The chain runs to 602 residues: MLPVQTSQLAAAFTDAVRALAPADANLPAVTFERPKAAAHGDLACNIAMQVAKSLKTNPRELAQKVVDAVKADSRATALVAALEIAGPGFINLRLSPEARAEVLRAVLADGDRYGARPVGEHGQVLVEFVSANPTGPLHVGHGRQAALGDALANLLAWQGWSVHREFYYNDAGVQIHTLAISVQARARGLKPGDAGWPESAYNGDYIADIAADFLAGKTVSASDGEPVTASGNIEDLESIRKFAVTYLRNEQDIDLQAFGVKFDRYYLESSLYSDGRVEAAVQSLIAKGKTYESEGALWLRTTDDGDDKDRVMKKGDGTYTYFVPDVAYHTTKWERGFSKVINVQGSDHHGTIARVRAGLQGLDIGIPQGYPDYVLHKMVTVMKNGEEVKISKRAGSYVTVRDLIEWSNGGEETIRGCLEAGVADWPAHFTRGRDAVRFFLLSRKADTEFVFDVDLALKQNDENPVYYVQYAHARICSIFEAWGGADWEARLGELASVDLAAVTAADVSPQAIALGRRLAEFPDMLAAASSELAPHAVAFYLRDLAGDFHAFYNADRVLVDDETVKRARLALLAATRQVLKNGLAVIGVSAPQRMDREAAPA.

The short motif at 132–142 (ANPTGPLHVGH) is the 'HIGH' region element.

This sequence belongs to the class-I aminoacyl-tRNA synthetase family. As to quaternary structure, monomer.

The protein resides in the cytoplasm. It carries out the reaction tRNA(Arg) + L-arginine + ATP = L-arginyl-tRNA(Arg) + AMP + diphosphate. The protein is Arginine--tRNA ligase of Cupriavidus metallidurans (strain ATCC 43123 / DSM 2839 / NBRC 102507 / CH34) (Ralstonia metallidurans).